The primary structure comprises 214 residues: Small ribosomal subunit protein uS5 (214 aa).

Positions 1–61 (MTDSSPQSNP…QERDSEWQER (61 aa)) are disordered. Residues 9–29 (NPNAVPGAADVPAAAEGQQQQ) are compositionally biased toward low complexity. The span at 30 to 60 (EQRRGRGDRDGRRGDRRGGRRGQERDSEWQE) shows a compositional bias: basic and acidic residues. The S5 DRBM domain occupies 58 to 121 (WQERVVQIRR…ADGKKHLVKV (64 aa)).

The protein belongs to the universal ribosomal protein uS5 family. Part of the 30S ribosomal subunit. Contacts proteins S4 and S8.

Its function is as follows. With S4 and S12 plays an important role in translational accuracy. In terms of biological role, located at the back of the 30S subunit body where it stabilizes the conformation of the head with respect to the body. This chain is Small ribosomal subunit protein uS5, found in Synechococcus sp. (strain CC9605).